We begin with the raw amino-acid sequence, 164 residues long: MDHGFYPTNLEGEGLRIGIVQARFNEPVCEALREACVAELEQLGVAGEDVLLVTVPGALEVPLALQKMAESGQFDALIALGAVIRGETYHFELVSNESGAGITRVCLDFNIAIANGILTTDTDAQAHARTREKGRDCARTAIEMANLTAALDGLQDHGQDDENE.

5-amino-6-(D-ribitylamino)uracil-binding positions include phenylalanine 24, 58–60, and 82–84; these read ALE and AVI. 87–88 provides a ligand contact to (2S)-2-hydroxy-3-oxobutyl phosphate; the sequence is ET. Catalysis depends on histidine 90, which acts as the Proton donor. Asparagine 115 is a 5-amino-6-(D-ribitylamino)uracil binding site. Arginine 129 contributes to the (2S)-2-hydroxy-3-oxobutyl phosphate binding site.

This sequence belongs to the DMRL synthase family.

The enzyme catalyses (2S)-2-hydroxy-3-oxobutyl phosphate + 5-amino-6-(D-ribitylamino)uracil = 6,7-dimethyl-8-(1-D-ribityl)lumazine + phosphate + 2 H2O + H(+). It participates in cofactor biosynthesis; riboflavin biosynthesis; riboflavin from 2-hydroxy-3-oxobutyl phosphate and 5-amino-6-(D-ribitylamino)uracil: step 1/2. In terms of biological role, catalyzes the formation of 6,7-dimethyl-8-ribityllumazine by condensation of 5-amino-6-(D-ribitylamino)uracil with 3,4-dihydroxy-2-butanone 4-phosphate. This is the penultimate step in the biosynthesis of riboflavin. In Ralstonia nicotianae (strain ATCC BAA-1114 / GMI1000) (Ralstonia solanacearum), this protein is 6,7-dimethyl-8-ribityllumazine synthase.